The following is a 341-amino-acid chain: Very-long-chain 3-oxoacyl-CoA reductase (341 aa).

A helical membrane pass occupies residues 17-37 (ALYGALLLGVYKLTTFALSLV). Residues Val-63, Asp-117, Asn-144, Tyr-218, Lys-222, Val-251, and Ser-253 each contribute to the NADP(+) site. The active-site Proton donor is Tyr-218. The active-site Lowers pKa of active site Tyr is Lys-222.

The protein belongs to the short-chain dehydrogenases/reductases (SDR) family.

Its subcellular location is the endoplasmic reticulum membrane. The catalysed reaction is a very-long-chain (3R)-3-hydroxyacyl-CoA + NADP(+) = a very-long-chain 3-oxoacyl-CoA + NADPH + H(+). Its pathway is lipid metabolism; fatty acid biosynthesis. Functionally, component of the microsomal membrane bound fatty acid elongation system, which produces the 26-carbon very long-chain fatty acids (VLCFA) from palmitate. Catalyzes the reduction of the 3-ketoacyl-CoA intermediate that is formed in each cycle of fatty acid elongation. VLCFAs serve as precursors for ceramide and sphingolipids. This is Very-long-chain 3-oxoacyl-CoA reductase from Meyerozyma guilliermondii (strain ATCC 6260 / CBS 566 / DSM 6381 / JCM 1539 / NBRC 10279 / NRRL Y-324) (Yeast).